A 695-amino-acid polypeptide reads, in one-letter code: N-terminal acetyltransferase A complex subunit-like protein C418.02 (695 aa).

TPR repeat units lie at residues 8–41 (EAFL…KPKH), 43–75 (DSVA…DPKS), 76–109 (QFCW…SPNN), 111–143 (SLWY…DSSN), 145–177 (EYRL…CNLS), 217–250 (FNFE…FPNR), 262–296 (WNFY…GISV), 365–398 (LWCT…TPTY), 399–432 (PELF…DKSD), and 477–510 (VWFL…YKKW).

As to quaternary structure, component of the N-terminal acetyltransferase A (NatA) complex.

It is found in the cytoplasm. It localises to the nucleus. Functionally, non-catalytic component of the NatA N-terminal acetyltransferase, which catalyzes acetylation of proteins beginning with Met-Ser, Met-Gly and Met-Ala. N-acetylation plays a role in normal eukaryotic translation and processing, protect against proteolytic degradation and protein turnover. The chain is N-terminal acetyltransferase A complex subunit-like protein C418.02 from Schizosaccharomyces pombe (strain 972 / ATCC 24843) (Fission yeast).